The primary structure comprises 699 residues: tRNA 5-methylaminomethyl-2-thiouridine biosynthesis bifunctional protein MnmC (699 aa).

The interval 1–260 (MTAKPHISCQ…ERKLLRQQAN (260 aa)) is tRNA (mnm(5)s(2)U34)-methyltransferase. Positions 282–699 (IGGGLASAHL…LRKLLKGKAL (418 aa)) are FAD-dependent cmnm(5)s(2)U34 oxidoreductase.

This sequence in the N-terminal section; belongs to the methyltransferase superfamily. tRNA (mnm(5)s(2)U34)-methyltransferase family. It in the C-terminal section; belongs to the DAO family. FAD serves as cofactor.

The protein localises to the cytoplasm. It carries out the reaction 5-aminomethyl-2-thiouridine(34) in tRNA + S-adenosyl-L-methionine = 5-methylaminomethyl-2-thiouridine(34) in tRNA + S-adenosyl-L-homocysteine + H(+). Its function is as follows. Catalyzes the last two steps in the biosynthesis of 5-methylaminomethyl-2-thiouridine (mnm(5)s(2)U) at the wobble position (U34) in tRNA. Catalyzes the FAD-dependent demodification of cmnm(5)s(2)U34 to nm(5)s(2)U34, followed by the transfer of a methyl group from S-adenosyl-L-methionine to nm(5)s(2)U34, to form mnm(5)s(2)U34. The protein is tRNA 5-methylaminomethyl-2-thiouridine biosynthesis bifunctional protein MnmC of Shewanella oneidensis (strain ATCC 700550 / JCM 31522 / CIP 106686 / LMG 19005 / NCIMB 14063 / MR-1).